The primary structure comprises 278 residues: uncharacterized protein (278 aa).

The interval 251–278 (TLSENKKQKSSSTSPETDSDMSEFFGDN) is disordered.

This is an uncharacterized protein from Aedes pseudoscutellaris reovirus (isolate France) (ApRV).